The sequence spans 401 residues: Ribosomal RNA large subunit methyltransferase G (401 aa).

It belongs to the methyltransferase superfamily. RlmG family.

Its subcellular location is the cytoplasm. It catalyses the reaction guanosine(1835) in 23S rRNA + S-adenosyl-L-methionine = N(2)-methylguanosine(1835) in 23S rRNA + S-adenosyl-L-homocysteine + H(+). Functionally, specifically methylates the guanine in position 1835 (m2G1835) of 23S rRNA. This Shewanella loihica (strain ATCC BAA-1088 / PV-4) protein is Ribosomal RNA large subunit methyltransferase G.